The following is a 70-amino-acid chain: Drosomycin (70 aa).

Positions Met1–Gly20 are cleaved as a signal peptide. The propeptide occupies Ala21–Ala26. Cystine bridges form between Cys28-Cys70, Cys37-Cys59, Cys45-Cys65, and Cys49-Cys67. The N-linked (GlcNAc...) asparagine glycan is linked to Asn42.

In terms of tissue distribution, hemolymph (at protein level). Synthesized in the fat body and is secreted into the blood. In larvae, expressed in the visceral branches and posterior spiracles of the trachea.

It is found in the secreted. Functionally, possesses antifungal activity and is active against a relatively broad spectrum of filamentous fungi. It inhibits spore germination at high concentrations and at low concentrations delays growth of hyphae which subsequently exhibit abnormal morphology. Spz C-106 in the hemolymph controls expression of the antifungal peptide by acting as a ligand of Tl and inducing an intracellular signaling pathway. Part of a psh-dependent Toll pathway, which may function in activating the systematic immune response in response to localized melanization of the tracheal system. The sequence is that of Drosomycin (Drs) from Drosophila melanogaster (Fruit fly).